The chain runs to 157 residues: Small ribosomal subunit protein uS7 (157 aa).

Belongs to the universal ribosomal protein uS7 family. As to quaternary structure, part of the 30S ribosomal subunit. Contacts proteins S9 and S11.

In terms of biological role, one of the primary rRNA binding proteins, it binds directly to 16S rRNA where it nucleates assembly of the head domain of the 30S subunit. Is located at the subunit interface close to the decoding center, probably blocks exit of the E-site tRNA. The chain is Small ribosomal subunit protein uS7 from Borrelia duttonii (strain Ly).